The primary structure comprises 475 residues: 3-isopropylmalate dehydratase large subunit (475 aa).

The [4Fe-4S] cluster site is built by C353, C414, and C417.

Belongs to the aconitase/IPM isomerase family. LeuC type 1 subfamily. In terms of assembly, heterodimer of LeuC and LeuD. [4Fe-4S] cluster is required as a cofactor.

It carries out the reaction (2R,3S)-3-isopropylmalate = (2S)-2-isopropylmalate. The protein operates within amino-acid biosynthesis; L-leucine biosynthesis; L-leucine from 3-methyl-2-oxobutanoate: step 2/4. Its function is as follows. Catalyzes the isomerization between 2-isopropylmalate and 3-isopropylmalate, via the formation of 2-isopropylmaleate. In Marinomonas sp. (strain MWYL1), this protein is 3-isopropylmalate dehydratase large subunit.